A 540-amino-acid chain; its full sequence is Probable metabolite transport protein YFL040W (540 aa).

The Cytoplasmic segment spans residues 1–29 (MTAMKAIVWRLPKMPKIKITKTYEVTKIT). A helical transmembrane segment spans residues 30–50 (AILTLVGFIMGLEVPSLATFL). At 51-67 (TNKTFNEYFKYPTPLQQ) the chain is on the extracellular side. An N-linked (GlcNAc...) asparagine glycan is attached at Asn52. Residues 68–88 (GLLMGSTPLGGIMGCFICCIM) form a helical membrane-spanning segment. Residues 89-101 (NDRFSRIYQFQSG) lie on the Cytoplasmic side of the membrane. The helical transmembrane segment at 102-122 (IIIWNIVTLLNFCIWDILGLL) threads the bilayer. At 123–126 (ICRM) the chain is on the extracellular side. A helical transmembrane segment spans residues 127–147 (IKGMILGNFSILVASYANEVI). Topologically, residues 148-158 (PRGKRGSTMSY) are cytoplasmic. The chain crosses the membrane as a helical span at residues 159-179 (IQLCLTIGILVMHYLCIALSL). Over 180 to 187 (WDSHFAFR) the chain is Extracellular. A helical membrane pass occupies residues 188 to 208 (IAWCIGIIPGLLFWMASYALP). Over 209–275 (ESYHWLVLHG…KKLPRGSFKP (67 aa)) the chain is Cytoplasmic. Residues 276–296 (LILGMTLQLLVQFSGINIILG) form a helical membrane-spanning segment. The Extracellular segment spans residues 297–313 (YITYICEIVGLEGNVKL). A helical transmembrane segment spans residues 314–334 (FTSSIPYFINMVLSLLPITFI). The Cytoplasmic segment spans residues 335 to 341 (DYTSRKL). A helical membrane pass occupies residues 342 to 362 (ITLLGGFPISGLLITIGALFV). At 363–385 (KYGQDTKPIDGNRSLVWSIGENP) the chain is on the extracellular side. N-linked (GlcNAc...) asparagine glycosylation is present at Asn374. The helical transmembrane segment at 386-406 (FVGGWILTLCFLIVGIFAMSL) threads the bilayer. At 407-428 (SSIPWVYTNEMLPSRVKVKGFA) the chain is on the cytoplasmic side. Residues 429–449 (ICVTFGWLGNFILTFLCPVMI) form a helical membrane-spanning segment. Over 450–455 (ERLKGT) the chain is Extracellular. A helical transmembrane segment spans residues 456-476 (TFIIFGSLTFLISLSVLIWFP). Over 477–540 (ETKGMSIEDI…KLKSDEEMII (64 aa)) the chain is Cytoplasmic. The disordered stretch occupies residues 499–540 (NLHGEKGIKTPDSNSNGGSTRSSQEGQLHKPIKLKSDEEMII). Polar residues predominate over residues 509–524 (PDSNSNGGSTRSSQEG).

It belongs to the major facilitator superfamily. Sugar transporter (TC 2.A.1.1) family.

It localises to the membrane. This chain is Probable metabolite transport protein YFL040W, found in Saccharomyces cerevisiae (strain ATCC 204508 / S288c) (Baker's yeast).